The chain runs to 78 residues: Large ribosomal subunit protein bL28 (78 aa).

This sequence belongs to the bacterial ribosomal protein bL28 family.

This chain is Large ribosomal subunit protein bL28, found in Parasynechococcus marenigrum (strain WH8102).